We begin with the raw amino-acid sequence, 142 residues long: Hemoglobin subunit alpha-A (142 aa).

Residues 2–142 (VLSANDKTNV…VGNVLTAKYR (141 aa)) form the Globin domain. Histidine 59 is a binding site for O2. Heme b is bound at residue histidine 88.

It belongs to the globin family. Heterotetramer of two alpha chains and two beta chains. As to expression, red blood cells.

Functionally, involved in oxygen transport from the lung to the various peripheral tissues. This chain is Hemoglobin subunit alpha-A (HBAA), found in Aegypius monachus (Cinereous vulture).